The primary structure comprises 414 residues: Serine hydroxymethyltransferase (414 aa).

(6S)-5,6,7,8-tetrahydrofolate contacts are provided by residues L116 and 120–122; that span reads GHL. K224 carries the post-translational modification N6-(pyridoxal phosphate)lysine. (6S)-5,6,7,8-tetrahydrofolate contacts are provided by residues E240 and 348–350; that span reads SPF.

The protein belongs to the SHMT family. As to quaternary structure, homodimer. Pyridoxal 5'-phosphate serves as cofactor.

The protein resides in the cytoplasm. It carries out the reaction (6R)-5,10-methylene-5,6,7,8-tetrahydrofolate + glycine + H2O = (6S)-5,6,7,8-tetrahydrofolate + L-serine. Its pathway is one-carbon metabolism; tetrahydrofolate interconversion. It participates in amino-acid biosynthesis; glycine biosynthesis; glycine from L-serine: step 1/1. Its function is as follows. Catalyzes the reversible interconversion of serine and glycine with tetrahydrofolate (THF) serving as the one-carbon carrier. This reaction serves as the major source of one-carbon groups required for the biosynthesis of purines, thymidylate, methionine, and other important biomolecules. Also exhibits THF-independent aldolase activity toward beta-hydroxyamino acids, producing glycine and aldehydes, via a retro-aldol mechanism. In Campylobacter concisus (strain 13826), this protein is Serine hydroxymethyltransferase.